Reading from the N-terminus, the 71-residue chain is Sec-independent protein translocase protein TatA (71 aa).

The chain crosses the membrane as a helical span at residues 1 to 21; sequence MGASPVQLLIVLFIAVLVFGG.

It belongs to the TatA/E family. As to quaternary structure, the Tat system comprises two distinct complexes: a TatABC complex, containing multiple copies of TatA, TatB and TatC subunits, and a separate TatA complex, containing only TatA subunits. Substrates initially bind to the TatABC complex, which probably triggers association of the separate TatA complex to form the active translocon.

It localises to the cell inner membrane. In terms of biological role, part of the twin-arginine translocation (Tat) system that transports large folded proteins containing a characteristic twin-arginine motif in their signal peptide across membranes. TatA could form the protein-conducting channel of the Tat system. The polypeptide is Sec-independent protein translocase protein TatA (Dichelobacter nodosus (strain VCS1703A)).